The sequence spans 324 residues: HSF-like protein (324 aa).

A signal peptide spans 1–19; sequence MNSLVALVLLGQIIGSTVS. 2 Cystatin fetuin-A-type domains span residues 21-130 and 141-254; these read QLGP…VKCS and RDCP…SDCV. 6 cysteine pairs are disulfide-bonded: Cys28/Cys315, Cys85/Cys96, Cys110/Cys129, Cys143/Cys146, Cys205/Cys217, and Cys230/Cys253. Residue Asn95 is glycosylated (N-linked (GlcNAc...) asparagine). N-linked (GlcNAc...) asparagine glycosylation is present at Asn204. The N-linked (GlcNAc...) asparagine glycan is linked to Asn282.

This sequence belongs to the fetuin family. In terms of assembly, homodimer. Expressed by the liver.

It is found in the secreted. May not have antihemorrhagic activity. This Protobothrops flavoviridis (Habu) protein is HSF-like protein.